Here is a 179-residue protein sequence, read N- to C-terminus: 3-hydroxyanthranilate 3,4-dioxygenase (179 aa).

Arg-47 provides a ligand contact to O2. Fe cation is bound by residues His-51, Glu-57, and His-96. A substrate-binding site is contributed by Glu-57. The substrate site is built by Arg-100 and Glu-110. Fe cation-binding residues include Cys-125, Cys-128, Cys-162, and Cys-165.

It belongs to the 3-HAO family. Fe(2+) serves as cofactor.

It carries out the reaction 3-hydroxyanthranilate + O2 = (2Z,4Z)-2-amino-3-carboxymuconate 6-semialdehyde. The protein operates within cofactor biosynthesis; NAD(+) biosynthesis; quinolinate from L-kynurenine: step 3/3. In terms of biological role, catalyzes the oxidative ring opening of 3-hydroxyanthranilate to 2-amino-3-carboxymuconate semialdehyde, which spontaneously cyclizes to quinolinate. This Bacillus cereus (strain ATCC 10987 / NRS 248) protein is 3-hydroxyanthranilate 3,4-dioxygenase.